The primary structure comprises 275 residues: NH(3)-dependent NAD(+) synthetase (275 aa).

39–46 (GLSGGVDS) lines the ATP pocket. Residue Asp45 participates in Mg(2+) binding. Arg124 contacts deamido-NAD(+). ATP is bound at residue Thr144. Position 149 (Glu149) interacts with Mg(2+). 2 residues coordinate deamido-NAD(+): Lys157 and Asp164. Positions 173 and 195 each coordinate ATP. Deamido-NAD(+) is bound at residue 255 to 256 (HK).

It belongs to the NAD synthetase family. As to quaternary structure, homodimer.

The enzyme catalyses deamido-NAD(+) + NH4(+) + ATP = AMP + diphosphate + NAD(+) + H(+). The protein operates within cofactor biosynthesis; NAD(+) biosynthesis; NAD(+) from deamido-NAD(+) (ammonia route): step 1/1. Catalyzes the ATP-dependent amidation of deamido-NAD to form NAD. Uses ammonia as a nitrogen source. This chain is NH(3)-dependent NAD(+) synthetase, found in Staphylothermus marinus (strain ATCC 43588 / DSM 3639 / JCM 9404 / F1).